The sequence spans 577 residues: MNIQALLSEKVSQAMIAAGAPADCEPQVRQSAKVQFGDYQANGMMAVAKKLGMAPRQLAEQVLTHLDLSGIASKVEIAGPGFINIFLEPAFLAEQVQQALASDRLGVSQPTRQTIVVDYSAPNVAKEMHVGHLRSTIIGDAAVRTLEFLGHHVIRANHVGDWGTQFGMLIAWLEKQQQENAGDMALADLEGFYRDAKKHYDEDEAFAERARNYVVKLQSGDTYFREMWRKLVDITMTQNQITYDRLNVTLTRDDVMGESLYNPMLPGIVADLKAKGLAVESEGATVVFLDEFKNKEGDPMGVIIQKKDGGYLYTTTDIACAKYRYETLHADRVLYYIDSRQHQHLMQAWTIVRKAGYVPDSVPLEHHMFGMMLGKDGKPFKTRAGGTVKLADLLDEALERARRLVAEKNPDMPADELEKLANAVGIGAVKYADLSKNRTTDYIFDWDNMLAFEGNTAPYMQYAYTRVLSVFRKANIDEQALASAPVIISEDREAQLAARLLQFEETLTVVAREGTPHVMCAYLYDVAGLFSGFYEHCPILSAENDAVRNSRLKLAQLTAKTLKLGLDTLGIETVERM.

Positions 122-132 match the 'HIGH' region motif; it reads PNVAKEMHVGH.

This sequence belongs to the class-I aminoacyl-tRNA synthetase family. As to quaternary structure, monomer.

It is found in the cytoplasm. The enzyme catalyses tRNA(Arg) + L-arginine + ATP = L-arginyl-tRNA(Arg) + AMP + diphosphate. In Salmonella typhimurium (strain SL1344), this protein is Arginine--tRNA ligase (argS).